Here is a 358-residue protein sequence, read N- to C-terminus: Trace amine-associated receptor 7b (358 aa).

Residues Met1–Arg47 lie on the Extracellular side of the membrane. N-linked (GlcNAc...) asparagine glycans are attached at residues Asn5 and Asn34. 2 disulfide bridges follow: Cys37-Cys201 and Cys120-Cys205. Residues Leu48–Val68 traverse the membrane as a helical segment. The Cytoplasmic portion of the chain corresponds to Met69–Asn83. Residues Phe84 to Ser104 traverse the membrane as a helical segment. Topologically, residues Thr105–Lys121 are extracellular. Residues Leu122–Val143 form a helical membrane-spanning segment. The Cytoplasmic segment spans residues Asp144–Lys166. Residues Cys167 to Ala187 form a helical membrane-spanning segment. The Extracellular portion of the chain corresponds to Asn188 to Ser212. Asn210 carries N-linked (GlcNAc...) asparagine glycosylation. A helical transmembrane segment spans residues Trp213–Ser233. The Cytoplasmic segment spans residues Lys234–Thr274. Residues Leu275 to Ile295 form a helical membrane-spanning segment. Over Asp296–Glu309 the chain is Extracellular. The helical transmembrane segment at Ile310 to Phe333 threads the bilayer. Residues Arg334–Glu358 lie on the Cytoplasmic side of the membrane.

The protein belongs to the G-protein coupled receptor 1 family. Specifically expressed in neurons of the olfactory epithelium.

It localises to the cell membrane. Its function is as follows. Olfactory receptor specific for N,N-dimethylalkylamines trace amines, such as N,N-dimethylcyclohexylamine. Trace amine compounds are enriched in animal body fluids and act on trace amine-associated receptors (TAARs) to elicit both intraspecific and interspecific innate behaviors. Ligand-binding causes a conformation change that triggers signaling via G(s)-class of G alpha proteins (GNAL or GNAS). This chain is Trace amine-associated receptor 7b, found in Mus musculus (Mouse).